A 487-amino-acid chain; its full sequence is Serine carboxypeptidase-like 37 (487 aa).

Residues 1-28 (MVKQQDWSVTTCVLLFLFLASQIHCRSG) form the signal peptide. The N-linked (GlcNAc...) asparagine glycan is linked to asparagine 105. Intrachain disulfides connect cysteine 120/cysteine 368, cysteine 280/cysteine 291, and cysteine 315/cysteine 336. Serine 215 is a catalytic residue. Residues asparagine 317, asparagine 357, and asparagine 375 are each glycosylated (N-linked (GlcNAc...) asparagine). Residue aspartate 407 is part of the active site. Asparagine 423 and asparagine 449 each carry an N-linked (GlcNAc...) asparagine glycan. Histidine 460 is a catalytic residue.

It belongs to the peptidase S10 family. Expressed in seedlings, roots, leaves, stems, flowers and siliques.

The protein localises to the secreted. In terms of biological role, probable carboxypeptidase. This chain is Serine carboxypeptidase-like 37 (SCPL37), found in Arabidopsis thaliana (Mouse-ear cress).